We begin with the raw amino-acid sequence, 154 residues long: MHIWVDADACPSVIKDILFRVADRLQLNVTLVANQLMRVPGSRFIRALQVPAGADAADAEIVARVSPGDIVVTGDIPLASLVLEKGGLPLNPRGEWYTKDTIAQQLTMRAFMEELRGSGVDTGGPAAFSQADRQNFANALDRELARRRNHSGPR.

It belongs to the UPF0178 family.

The sequence is that of UPF0178 protein in pahZ1 5'region from Paucimonas lemoignei (Pseudomonas lemoignei).